The sequence spans 181 residues: Crossover junction endodeoxyribonuclease RuvC (181 aa).

Active-site residues include Asp7, Glu67, and Asp139. Mg(2+)-binding residues include Asp7, Glu67, and Asp139.

It belongs to the RuvC family. Homodimer which binds Holliday junction (HJ) DNA. The HJ becomes 2-fold symmetrical on binding to RuvC with unstacked arms; it has a different conformation from HJ DNA in complex with RuvA. In the full resolvosome a probable DNA-RuvA(4)-RuvB(12)-RuvC(2) complex forms which resolves the HJ. It depends on Mg(2+) as a cofactor.

It localises to the cytoplasm. It catalyses the reaction Endonucleolytic cleavage at a junction such as a reciprocal single-stranded crossover between two homologous DNA duplexes (Holliday junction).. In terms of biological role, the RuvA-RuvB-RuvC complex processes Holliday junction (HJ) DNA during genetic recombination and DNA repair. Endonuclease that resolves HJ intermediates. Cleaves cruciform DNA by making single-stranded nicks across the HJ at symmetrical positions within the homologous arms, yielding a 5'-phosphate and a 3'-hydroxyl group; requires a central core of homology in the junction. The consensus cleavage sequence is 5'-(A/T)TT(C/G)-3'. Cleavage occurs on the 3'-side of the TT dinucleotide at the point of strand exchange. HJ branch migration catalyzed by RuvA-RuvB allows RuvC to scan DNA until it finds its consensus sequence, where it cleaves and resolves the cruciform DNA. This Ralstonia nicotianae (strain ATCC BAA-1114 / GMI1000) (Ralstonia solanacearum) protein is Crossover junction endodeoxyribonuclease RuvC.